Reading from the N-terminus, the 125-residue chain is uncharacterized protein (125 aa).

Residues 1–33 (MLPHQNSSYTRQGTNDAQANDMRSPSQLPTSVN) show a composition bias toward polar residues. 2 disordered regions span residues 1–35 (MLPH…VNIE) and 44–63 (SEKL…KKHT). The span at 53–63 (NRSRSGIKKHT) shows a compositional bias: basic residues.

This is an uncharacterized protein from Schizosaccharomyces pombe (strain 972 / ATCC 24843) (Fission yeast).